We begin with the raw amino-acid sequence, 308 residues long: Cell division protein FtsX (308 aa).

At 1–24 (MISRFFRHLFEALKSLKRNGWMTV) the chain is on the cytoplasmic side. Residues 25–45 (AAVSSVMITLTLVAIFASVIF) traverse the membrane as a helical segment. The Extracellular segment spans residues 46-178 (NTAKLATDIE…NTERLFKLAS (133 aa)). Residues 179–199 (FIRVWGLGIAALLIFIAVFLI) form a helical membrane-spanning segment. Residues 200–236 (SNTIRITIISRSREIQIMRLVGAKNSYIRGPFLLEGA) lie on the Cytoplasmic side of the membrane. The helical transmembrane segment at 237–257 (FIGLLGAIAPSVLVFIVYQIV) threads the bilayer. Topologically, residues 258-276 (YQSVNKSLVGQNLSMISPD) are extracellular. The chain crosses the membrane as a helical span at residues 277–297 (LFSPLMIALLFVIGVFIGSLG). Over 298-308 (SGISMRRFLKI) the chain is Cytoplasmic.

The protein belongs to the ABC-4 integral membrane protein family. FtsX subfamily. Homodimer. Interacts with FtsE; forms a membrane-associated complex. Interacts (via large extracellular loop) with PcsB (via N-terminal coiled-coil domain). This interaction directs PcsB to equatorial and septal sites of dividing cells.

It is found in the cell membrane. Functionally, part of the ABC transporter FtsEX involved in asymmetric cellular division facilitating the initiation of sporulation. Required in maintaining normal growth and cellular morphology. In Streptococcus pneumoniae serotype 2 (strain D39 / NCTC 7466), this protein is Cell division protein FtsX.